The following is a 581-amino-acid chain: Multidrug resistance-like ATP-binding protein MdlA (581 aa).

One can recognise an ABC transmembrane type-1 domain in the interval 18-303 (YLGSIILLII…LAWMFNIVER (286 aa)). A run of 6 helical transmembrane segments spans residues 23–43 (ILLIIIAFLQLLPPKIIGILI), 53–73 (GFEILPWISIILLIAIIVYIL), 127–149 (VVFAAGEGVLTLVDSSVMGISVL), 153–175 (ITQISWLLTIISLIPMPIMAILI), 247–267 (VIYLSVAFSNLLAITAGGWLV), and 280–300 (FIMYLGLMIWPMLALAWMFNI). One can recognise an ABC transporter domain in the interval 337-571 (INIDMFFYPK…KNWYKSMYDH (235 aa)). 369 to 376 (GPTGAGKS) provides a ligand contact to ATP.

The protein belongs to the ABC transporter superfamily. Drug exporter-2 (TC 3.A.1.117) family.

It localises to the cell membrane. The enzyme catalyses ATP + H2O + xenobioticSide 1 = ADP + phosphate + xenobioticSide 2.. In Buchnera aphidicola subsp. Schizaphis graminum (strain Sg), this protein is Multidrug resistance-like ATP-binding protein MdlA (mdlA).